Reading from the N-terminus, the 315-residue chain is MPREDRATWKSNYFLKIIQLLDDYPKCFIVGADNVGSKQMQQIRMSLRGKAVVLMGKNTMMRKAIRGHLENNSALEKLLPHIKGNVGFVFTKEDLAEVRDMLLANKVPASARAGAIAPCDVTVPAQNTGLGPEKTSFFQALGITTKISRGTIEILSDVQLIKTGDKVGASEATLLNMLNISPFSFGLIIQQVYDNGSIYSPEVLDITEDALRARFLEGVRNIASVCLQIGYPTVASVPHSVVNGYKRVLALAVETDYSFPLADKVKAFLADPSAFVVAAPVAETAAAPAASAAPAKEEKEESEESDDDMGFGLFD.

A compositionally biased stretch (low complexity) spans 285–294; it reads AAAPAASAAP. The tract at residues 285–315 is disordered; the sequence is AAAPAASAAPAKEEKEESEESDDDMGFGLFD. Residues 300–309 are compositionally biased toward acidic residues; the sequence is EESEESDDDM.

It belongs to the universal ribosomal protein uL10 family. In terms of assembly, P0 forms a pentameric complex by interaction with dimers of P1 and P2. Phosphorylated.

In terms of biological role, ribosomal protein P0 is the functional equivalent of E.coli protein L10. In Lithobates sylvaticus (Wood frog), this protein is Large ribosomal subunit protein uL10 (RPLP0).